A 150-amino-acid polypeptide reads, in one-letter code: Avidin-related protein 6 (150 aa).

An N-terminal signal peptide occupies residues 1–24 (MVHATSPLLLLLLLSLALVAPGLS). An Avidin-like domain is found at 26–147 (RKCSLTGEWD…GYNNFTRQRT (122 aa)). Cysteine 28 and cysteine 105 are disulfide-bonded. Residues asparagine 36 and serine 40 each contribute to the biotin site. N-linked (GlcNAc...) asparagine glycosylation occurs at asparagine 54. 3 residues coordinate biotin: tyrosine 57, threonine 59, and aspartate 63. The N-linked (GlcNAc...) asparagine glycan is linked to asparagine 93. Biotin-binding residues include serine 95, serine 99, and asparagine 140. Residue asparagine 141 is glycosylated (N-linked (GlcNAc...) asparagine).

The protein belongs to the avidin/streptavidin family. Homotetramer. Glycosylated.

Its subcellular location is the secreted. Its function is as follows. Forms a strong non-covalent specific complex with biotin. The protein is Avidin-related protein 6 (AVR6) of Gallus gallus (Chicken).